Consider the following 29-residue polypeptide: Potassium-transporting ATPase KdpF subunit (29 aa).

A helical membrane pass occupies residues 2–22 (LIGEAVLAVVTVAVVAYLTYV).

The protein belongs to the KdpF family. As to quaternary structure, the system is composed of three essential subunits: KdpA, KdpB and KdpC. The complex also contains KdpF, a small non-essential subunit.

The protein resides in the cell membrane. Functionally, part of the high-affinity ATP-driven potassium transport (or Kdp) system, which catalyzes the hydrolysis of ATP coupled with the electrogenic transport of potassium into the cytoplasm. This subunit may be involved in stabilization of the complex. The Kdp system is essential for growth under K(+) limitation, and for survival under desiccation and salt crystal inclusion. The sequence is that of Potassium-transporting ATPase KdpF subunit from Halobacterium salinarum (strain ATCC 29341 / DSM 671 / R1).